Consider the following 134-residue polypeptide: Large ribosomal subunit protein eL32 (134 aa).

The protein belongs to the eukaryotic ribosomal protein eL32 family.

The sequence is that of Large ribosomal subunit protein eL32 (RPL32) from Tetrahymena thermophila (strain SB210).